The primary structure comprises 329 residues: MSSTSQVALLPKLSLPDGVTVWDGTALEYERRCNNVDEHAVHLMQTINILGIRSKEAQCLNTVLTSVARLRENRQARVYLLCQDGYGVGILKMGVKKLFVTHPSYSSLVEIDPLCVLDFFVDTSFQRKGFGKTLFDAMLLNEGLNPGEVAIDRPSVKFLAFLQKYYGLVEYTPQSNNFVVFHRYFDKWQPQRGKGHWGGNAVPTRSLVRPQNCLRVYPKYQSTTGPNNNFEEDATHRTPPPPPLPPPLVPQGSVTSPGVGKKTAYELQYEEYLREQAYRRRQGGDPRLQPVPNPVSSSEIVAASCGARRRMSPTRSGVQYNIISGTPEH.

The N-acetyltransferase domain occupies 5-185 (SQVALLPKLS…NNFVVFHRYF (181 aa)). Acetyl-CoA contacts are provided by residues 119-132 (FFVD…GFGK) and 155-164 (SVKFLAFLQK). Disordered stretches follow at residues 218 to 261 (PKYQ…GVGK) and 306 to 329 (GARR…TPEH). Polar residues predominate over residues 220 to 229 (YQSTTGPNNN). The segment covering 238 to 249 (TPPPPPLPPPLV) has biased composition (pro residues). Residues 313–329 (PTRSGVQYNIISGTPEH) are compositionally biased toward polar residues.

This sequence belongs to the acetyltransferase ATAT1 family.

It carries out the reaction L-lysyl-[alpha-tubulin] + acetyl-CoA = N(6)-acetyl-L-lysyl-[alpha-tubulin] + CoA + H(+). Functionally, specifically acetylates 'Lys-40' in alpha-tubulin on the lumenal side of microtubules. Promotes microtubule destabilization and accelerates microtubule dynamics; this activity may be independent of acetylation activity. Acetylates alpha-tubulin with a slow enzymatic rate, due to a catalytic site that is not optimized for acetyl transfer. Enters the microtubule through each end and diffuses quickly throughout the lumen of microtubules. Acetylates only long/old microtubules because of its slow acetylation rate since it does not have time to act on dynamically unstable microtubules before the enzyme is released. The polypeptide is Alpha-tubulin N-acetyltransferase 1 (Trypanosoma cruzi (strain CL Brener)).